The sequence spans 1740 residues: Vitamin B12-dependent ribonucleoside-diphosphate reductase (1740 aa).

The 93-residue stretch at 4 to 96 folds into the ATP-cone domain; sequence EKVMKRDGRI…LYRKKKAEIR (93 aa). Substrate contacts are provided by residues threonine 257, 272 to 273, and glycine 301; that span reads AC. A disulfide bridge links cysteine 273 with cysteine 1308. The DOD-type homing endonuclease 1 domain occupies 443–582; that stretch reads LAGFIAGDGC…VTHYLNALGI (140 aa). The Proton acceptor role is filled by asparagine 913. Residue 913 to 914 participates in substrate binding; that stretch reads NP. Residues 1063-1194 enclose the DOD-type homing endonuclease 2 domain; the sequence is VLGWFIGDGY…VQDLLLLFGI (132 aa). Cysteine 1297 serves as the catalytic Cysteine radical intermediate. Substrate is bound by residues 1297 to 1299 and 1471 to 1475; these read CGE and PTGSV. The active-site Proton acceptor is the glutamate 1299.

This sequence belongs to the ribonucleoside diphosphate reductase class-2 family. Adenosylcob(III)alamin serves as cofactor. In terms of processing, this protein undergoes a protein self splicing that involves a post-translational excision of the intervening region (intein) followed by peptide ligation.

It catalyses the reaction a 2'-deoxyribonucleoside 5'-diphosphate + [thioredoxin]-disulfide + H2O = a ribonucleoside 5'-diphosphate + [thioredoxin]-dithiol. Its function is as follows. Provides the precursors necessary for DNA synthesis. Catalyzes the biosynthesis of deoxyribonucleotides from the corresponding ribonucleotides. In Pyrococcus furiosus (strain ATCC 43587 / DSM 3638 / JCM 8422 / Vc1), this protein is Vitamin B12-dependent ribonucleoside-diphosphate reductase (rnr).